We begin with the raw amino-acid sequence, 166 residues long: Crossover junction endodeoxyribonuclease RuvC (166 aa).

Residues D12, E71, and D143 contribute to the active site. Residues D12, E71, and D143 each contribute to the Mg(2+) site.

This sequence belongs to the RuvC family. Homodimer which binds Holliday junction (HJ) DNA. The HJ becomes 2-fold symmetrical on binding to RuvC with unstacked arms; it has a different conformation from HJ DNA in complex with RuvA. In the full resolvosome a probable DNA-RuvA(4)-RuvB(12)-RuvC(2) complex forms which resolves the HJ. The cofactor is Mg(2+).

The protein resides in the cytoplasm. The enzyme catalyses Endonucleolytic cleavage at a junction such as a reciprocal single-stranded crossover between two homologous DNA duplexes (Holliday junction).. The RuvA-RuvB-RuvC complex processes Holliday junction (HJ) DNA during genetic recombination and DNA repair. Endonuclease that resolves HJ intermediates. Cleaves cruciform DNA by making single-stranded nicks across the HJ at symmetrical positions within the homologous arms, yielding a 5'-phosphate and a 3'-hydroxyl group; requires a central core of homology in the junction. The consensus cleavage sequence is 5'-(A/T)TT(C/G)-3'. Cleavage occurs on the 3'-side of the TT dinucleotide at the point of strand exchange. HJ branch migration catalyzed by RuvA-RuvB allows RuvC to scan DNA until it finds its consensus sequence, where it cleaves and resolves the cruciform DNA. The sequence is that of Crossover junction endodeoxyribonuclease RuvC from Oleidesulfovibrio alaskensis (strain ATCC BAA-1058 / DSM 17464 / G20) (Desulfovibrio alaskensis).